Reading from the N-terminus, the 129-residue chain is Follitropin subunit beta (129 aa).

An N-terminal signal peptide occupies residues Met-1–Ser-20. 6 cysteine pairs are disulfide-bonded: Cys-21/Cys-69, Cys-35/Cys-84, Cys-38/Cys-122, Cys-46/Cys-100, Cys-50/Cys-102, and Cys-105/Cys-112. Residues Asn-25 and Asn-42 are each glycosylated (N-linked (GlcNAc...) asparagine).

This sequence belongs to the glycoprotein hormones subunit beta family. Heterodimer. The active follitropin is a heterodimer composed of an alpha chain/CGA shared with other hormones and a unique beta chain/FSHB shown here.

It localises to the secreted. Functionally, together with the alpha chain CGA constitutes follitropin, the follicle-stimulating hormone, and provides its biological specificity to the hormone heterodimer. Binds FSHR, a G protein-coupled receptor, on target cells to activate downstream signaling pathways. Follitropin is involved in follicle development and spermatogenesis in reproductive organs. The polypeptide is Follitropin subunit beta (FSHB) (Saimiri boliviensis boliviensis (Bolivian squirrel monkey)).